The primary structure comprises 215 residues: Large ribosomal subunit protein bL25 (215 aa).

Residues 192–202 (EEEEVEEEVAE) are compositionally biased toward acidic residues. The tract at residues 192 to 215 (EEEEVEEEVAEPEVIKRKEEEEEE) is disordered. The segment covering 204–215 (EVIKRKEEEEEE) has biased composition (basic and acidic residues).

The protein belongs to the bacterial ribosomal protein bL25 family. CTC subfamily. In terms of assembly, part of the 50S ribosomal subunit; part of the 5S rRNA/L5/L18/L25 subcomplex. Contacts the 5S rRNA. Binds to the 5S rRNA independently of L5 and L18.

This is one of the proteins that binds to the 5S RNA in the ribosome where it forms part of the central protuberance. The chain is Large ribosomal subunit protein bL25 from Thermotoga neapolitana (strain ATCC 49049 / DSM 4359 / NBRC 107923 / NS-E).